Here is a 78-residue protein sequence, read N- to C-terminus: Beta-defensin 29 (78 aa).

Positions 1 to 23 (MPVTKPYFVTVAVLLILVDKTTG) are cleaved as a signal peptide. Intrachain disulfides connect cysteine 40/cysteine 67, cysteine 47/cysteine 61, and cysteine 51/cysteine 68.

It belongs to the beta-defensin family.

Its subcellular location is the secreted. Its function is as follows. Has antibacterial activity. The polypeptide is Beta-defensin 29 (Defb29) (Rattus norvegicus (Rat)).